A 60-amino-acid polypeptide reads, in one-letter code: Large ribosomal subunit protein bL33 (60 aa).

It belongs to the bacterial ribosomal protein bL33 family.

This is Large ribosomal subunit protein bL33 from Chlorobium limicola (strain DSM 245 / NBRC 103803 / 6330).